A 525-amino-acid chain; its full sequence is NAD(P)H-quinone oxidoreductase chain 4-1 (525 aa).

The next 14 membrane-spanning stretches (helical) occupy residues 4 to 24, 37 to 57, 89 to 109, 111 to 131, 134 to 154, 167 to 187, 210 to 230, 241 to 261, 273 to 293, 309 to 329, 330 to 350, 385 to 405, 416 to 436, and 462 to 482; these read FPWL…IPII, LAVG…GFDL, LIIL…PVTL, PKLF…VFAV, ILLF…ILSI, FILY…TLAF, LLLY…FPLH, TAPA…YALL, AVFA…AAFT, ISHM…GMSG, AMLQ…MVGA, LALP…GFAT, IVVV…LSML, and VFII…PKLI.

This sequence belongs to the complex I subunit 4 family.

The protein resides in the cellular thylakoid membrane. It carries out the reaction a plastoquinone + NADH + (n+1) H(+)(in) = a plastoquinol + NAD(+) + n H(+)(out). The catalysed reaction is a plastoquinone + NADPH + (n+1) H(+)(in) = a plastoquinol + NADP(+) + n H(+)(out). In terms of biological role, NDH-1 shuttles electrons from NAD(P)H, via FMN and iron-sulfur (Fe-S) centers, to quinones in the respiratory chain. The immediate electron acceptor for the enzyme in this species is believed to be plastoquinone. Couples the redox reaction to proton translocation (for every two electrons transferred, four hydrogen ions are translocated across the cytoplasmic membrane), and thus conserves the redox energy in a proton gradient. This chain is NAD(P)H-quinone oxidoreductase chain 4-1 (ndhD1), found in Synechocystis sp. (strain ATCC 27184 / PCC 6803 / Kazusa).